The following is a 531-amino-acid chain: CCA tRNA nucleotidyltransferase, mitochondrial (531 aa).

This sequence belongs to the tRNA nucleotidyltransferase/poly(A) polymerase family.

Its subcellular location is the mitochondrion. The protein localises to the cytoplasm. It is found in the nucleus. It carries out the reaction a tRNA precursor + 2 CTP + ATP = a tRNA with a 3' CCA end + 3 diphosphate. In terms of biological role, nucleotidyltransferase that catalyzes the addition and repair of the essential 3'-terminal CCA sequence in tRNAs, which is necessary for the attachment of amino acids to the 3' terminus of tRNA molecules, using CTP and ATP as substrates. tRNA 3'-terminal CCA addition is required both for tRNA processing and repair. Also involved in tRNA surveillance by mediating tandem CCA addition to generate a CCACCA at the 3' terminus of unstable tRNAs. While stable tRNAs receive only 3'-terminal CCA, unstable tRNAs are marked with CCACCA and rapidly degraded. The structural flexibility of RNA controls the choice between CCA versus CCACCA addition: following the first CCA addition cycle, nucleotide-binding to the active site triggers a clockwise screw motion, producing torque on the RNA. This ejects stable RNAs, whereas unstable RNAs are refolded while bound to the enzyme and subjected to a second CCA catalytic cycle. The polypeptide is CCA tRNA nucleotidyltransferase, mitochondrial (CCA1) (Candida glabrata (strain ATCC 2001 / BCRC 20586 / JCM 3761 / NBRC 0622 / NRRL Y-65 / CBS 138) (Yeast)).